The primary structure comprises 4981 residues: Protocadherin Fat 4 (4981 aa).

Positions 1–42 (MNLAANRAPGRRRLPLPSPSLCQLLRVWGLLSLLPGSARVQA) are cleaved as a signal peptide. At 43-4505 (AEQRQVFQVM…PDEISLPLWA (4463 aa)) the chain is on the extracellular side. Cadherin domains are found at residues 44-135 (EQRQ…APVF), 136-250 (PDPS…PPVF), 251-353 (GSSH…DPVV), 359-475 (PATS…PPVF), 476-582 (EQQV…KPVF), 584-689 (QPEG…SPVF), 690-793 (YPVQ…PPVF), 794-893 (SQAA…APHF), 894-996 (LQAV…PPVF), 997-1100 (DQIS…RPLF), 1101-1210 (NSTN…APKF), 1211-1315 (LKDF…TPSF), 1316-1420 (PKST…PPSF), 1421-1529 (PPGD…VPMF), 1529-1629 (FISQ…GPVF), 1630-1740 (TQTK…PPVF), 1741-1841 (PTDT…TPRF), 1842-1944 (SRPV…PPVF), 1945-2051 (SMSS…PPMF), 2051-2154 (FLSP…NPVF), 2155-2259 (AQAM…VPVF), 2260-2364 (ELSP…VPTF), 2365-2468 (ANNM…PPRF), 2469-2569 (QHHP…FPKV), 2570-2671 (RAKE…APTF), 2672-2775 (EEDP…APRF), 2775-2874 (FSQI…TPRF), 2875-2985 (SRPS…PPQF), 2986-3091 (LQNK…TPEF), 3092-3196 (SQNH…SPVF), 3197-3300 (VPDE…VPRF), 3301-3406 (VSKL…PPVF), 3407-3512 (SLST…GPVL), and 3511-3622 (VLTV…VEIF). 2 N-linked (GlcNAc...) asparagine glycosylation sites follow: asparagine 84 and asparagine 237. 18 N-linked (GlcNAc...) asparagine glycosylation sites follow: asparagine 393, asparagine 416, asparagine 435, asparagine 483, asparagine 551, asparagine 615, asparagine 676, asparagine 721, asparagine 825, asparagine 880, asparagine 948, asparagine 1085, asparagine 1101, asparagine 1104, asparagine 1225, asparagine 1296, asparagine 1389, and asparagine 1514. Residues asparagine 1828, asparagine 1899, asparagine 1967, and asparagine 2119 are each glycosylated (N-linked (GlcNAc...) asparagine). N-linked (GlcNAc...) asparagine glycans are attached at residues asparagine 2387 and asparagine 2432. Residues asparagine 2923, asparagine 2939, asparagine 3038, asparagine 3142, asparagine 3219, asparagine 3394, and asparagine 3479 are each glycosylated (N-linked (GlcNAc...) asparagine). N-linked (GlcNAc...) asparagine glycosylation is found at asparagine 3708 and asparagine 3760. An EGF-like 1 domain is found at 3804-3862 (DHDPCIHGPCQNGGSCLRRLAVGSALKIQESLPVIIVANEPLQPSQCKCVPGYAGSWCE). Disulfide bonds link cysteine 3808/cysteine 3819, cysteine 3813/cysteine 3850, cysteine 3852/cysteine 3861, cysteine 3868/cysteine 3879, cysteine 3873/cysteine 3888, cysteine 3890/cysteine 3899, cysteine 3906/cysteine 3917, cysteine 3911/cysteine 3926, cysteine 3928/cysteine 3937, cysteine 3944/cysteine 3955, cysteine 3949/cysteine 3964, and cysteine 3966/cysteine 3975. Positions 3864-3900 (DIDECLPAPCHNGGTCHNLVGGFSCSCPEGFTGRACE) constitute an EGF-like 2; calcium-binding domain. The region spanning 3902–3938 (DINECLPSPCKHGAVCQNFPGGFNCVCKTGYTGKMCE) is the EGF-like 3; calcium-binding domain. The 37-residue stretch at 3940-3976 (SVNYCECNPCFNGGSCQSGVESYYCHCPFGVFGKHCE) folds into the EGF-like 4 domain. In terms of domain architecture, Laminin G-like 1 spans 3977–4161 (LNSYGFEELS…LAAQGILDQC (185 aa)). Asparagine 4019 carries an N-linked (GlcNAc...) asparagine glycan. Cystine bridges form between cysteine 4135-cysteine 4161, cysteine 4168-cysteine 4179, cysteine 4173-cysteine 4188, and cysteine 4190-cysteine 4199. Residues 4164 to 4200 (LEGTCARNPCQHGGTCVDFWSWQQCQCMEGLTGKYCE) enclose the EGF-like 5 domain. Residues 4219-4399 (YHMSQSEKRE…KTDPSVKIGC (181 aa)) form the Laminin G-like 2 domain. Residues asparagine 4269 and asparagine 4314 are each glycosylated (N-linked (GlcNAc...) asparagine). Disulfide bonds link cysteine 4366–cysteine 4399, cysteine 4431–cysteine 4442, cysteine 4436–cysteine 4452, and cysteine 4454–cysteine 4463. In terms of domain architecture, EGF-like 6 spans 4427–4464 (PPGDCASHPCQNGGSCEPGLLSGYTCSCPESHTGRTCE). Residues 4506-4526 (VPAIVGSCATALALLVLSLIL) form a helical membrane-spanning segment. Over 4527-4981 (CNQCRGKMPK…AKDGEAEQYV (455 aa)) the chain is Cytoplasmic. 5 disordered regions span residues 4535–4585 (PKNP…PDII), 4677–4713 (PSSYGQGLRTSSLSHSACPTPNPLSRHSPAPFSKPSA), 4753–4773 (RRSKSPQAMASHGSRPGSRLK), 4796–4911 (RLNT…PAAA), and 4957–4981 (AAGNEEGKSGAAKPAAKDGEAEQYV). A compositionally biased stretch (polar residues) spans 4677–4701 (PSSYGQGLRTSSLSHSACPTPNPLS). The segment at 4708–4797 (FSKPSAFYRN…GLSIEEVERL (90 aa)) is necessary and sufficient for interaction with MPDZ. Positions 4811–4823 (DHGRSSSEEDCRR) are enriched in basic and acidic residues. Position 4878 is a phosphoserine (serine 4878). The segment covering 4971-4981 (AAKDGEAEQYV) has biased composition (basic and acidic residues).

Heterophilic interaction with DCHS1; this interaction affects their respective protein levels. Interacts (via cytoplasmic domain) with MPDZ. Forms a complex with PALS1 and MPDZ. As to expression, widely expressed.

The protein localises to the membrane. Its function is as follows. Cadherins are cell-cell interaction molecules. FAT4 plays a role in the maintenance of planar cell polarity as well as in inhibition of YAP1-mediated neuroprogenitor cell proliferation and differentiation. The polypeptide is Protocadherin Fat 4 (Fat4) (Mus musculus (Mouse)).